Here is a 24-residue protein sequence, read N- to C-terminus: Superoxide dismutase [Cu-Zn], chloroplastic (24 aa).

This sequence belongs to the Cu-Zn superoxide dismutase family. In terms of assembly, homodimer. It depends on Cu cation as a cofactor. Requires Zn(2+) as cofactor.

Its subcellular location is the plastid. The protein localises to the chloroplast. The enzyme catalyses 2 superoxide + 2 H(+) = H2O2 + O2. Functionally, destroys radicals which are normally produced within the cells and which are toxic to biological systems. The chain is Superoxide dismutase [Cu-Zn], chloroplastic from Picea abies (Norway spruce).